The following is a 424-amino-acid chain: MTLLALGINHKTATIEVREQVAFTPAELAGALAELKSLPGVNEAAVLSTCNRTELYCVTDSQGEREVLDWLGRFHALPPETLMQSAYHYLDGEAARHLMRVAAGLDSMVLGEPQILGQLKEAYQLARDNAGLGGELERLFQHTFSVAKQVRSETGIGENPVSVAYAAVSLASHIFDDFGRARALLIGAGETIELVARHLREAGIRGLTVANRTRERAELLAHEVDAEAISLGEIPQALAHADIIISSTASPLPILGKGMVESALKKRRHRPMFMVDIAVPRDIESQVGELDDVFLYSVDDLQEVIEENRKQRAVAAAQAESLIEHGIQHWQHERRVRGAGDLIRRYREQGEALREEAERQALAQLARGEDPEKVLQRLSRQLTNKLLHGPTLRLREASGEARHDILKAADTLLIDPAASTQDSA.

Residues 49–52 (TCNR), serine 107, 112–114 (EPQ), and glutamine 118 contribute to the substrate site. Cysteine 50 (nucleophile) is an active-site residue. NADP(+) is bound at residue 187–192 (GAGETI).

The protein belongs to the glutamyl-tRNA reductase family. As to quaternary structure, homodimer.

The catalysed reaction is (S)-4-amino-5-oxopentanoate + tRNA(Glu) + NADP(+) = L-glutamyl-tRNA(Glu) + NADPH + H(+). It functions in the pathway porphyrin-containing compound metabolism; protoporphyrin-IX biosynthesis; 5-aminolevulinate from L-glutamyl-tRNA(Glu): step 1/2. Functionally, catalyzes the NADPH-dependent reduction of glutamyl-tRNA(Glu) to glutamate 1-semialdehyde (GSA). In Chromohalobacter salexigens (strain ATCC BAA-138 / DSM 3043 / CIP 106854 / NCIMB 13768 / 1H11), this protein is Glutamyl-tRNA reductase.